The following is a 920-amino-acid chain: Protein FAN (920 aa).

Positions 176–247 (RLARTSFDKN…QDVRRIYKRR (72 aa)) constitute a GRAM domain. The 98-residue stretch at 189 to 286 (SVSEKLHMEC…DRDDLYFYIA (98 aa)) folds into the BEACH-type PH domain. Positions 290 to 575 (EHHAAEHTAE…QLFVTPHPRR (286 aa)) constitute a BEACH domain. WD repeat units follow at residues 631 to 661 (IHKE…KMFS), 673 to 703 (FSNM…YFYS), 715 to 743 (GHDD…KVWS), 764 to 794 (EHDV…NIWD), 806 to 836 (CHSG…NVID), and 887 to 917 (GHTG…MFWK).

Functionally, couples the p55 TNF-receptor (TNF-R55 / TNFR1) to neutral sphingomyelinase (N-SMASE). Specifically binds to the N-smase activation domain of TNF-R55. May regulate ceramide production by N-SMASE. The polypeptide is Protein FAN (Nsmaf) (Mus musculus (Mouse)).